The primary structure comprises 325 residues: tRNA U34 carboxymethyltransferase (325 aa).

Residues Lys-91, Trp-105, Lys-110, Gly-130, 152–154, Met-196, Tyr-200, and Arg-315 each bind carboxy-S-adenosyl-L-methionine; that span reads DPS.

The protein belongs to the class I-like SAM-binding methyltransferase superfamily. CmoB family. Homotetramer.

It catalyses the reaction carboxy-S-adenosyl-L-methionine + 5-hydroxyuridine(34) in tRNA = 5-carboxymethoxyuridine(34) in tRNA + S-adenosyl-L-homocysteine + H(+). In terms of biological role, catalyzes carboxymethyl transfer from carboxy-S-adenosyl-L-methionine (Cx-SAM) to 5-hydroxyuridine (ho5U) to form 5-carboxymethoxyuridine (cmo5U) at position 34 in tRNAs. This Aeromonas salmonicida (strain A449) protein is tRNA U34 carboxymethyltransferase.